A 518-amino-acid polypeptide reads, in one-letter code: Squalene monooxygenase 1,2 (518 aa).

The next 2 membrane-spanning stretches (helical) occupy residues 3–23 (MAFV…WTIF) and 48–68 (GPDV…YALA). Residues 58 to 59 (VG), 78 to 79 (ER), Arg-86, Phe-91, Arg-158, Val-174, Asp-337, and Met-350 each bind FAD. A helical membrane pass occupies residues 448–468 (LFYHLFVISLSSIGQLLSPFP).

It belongs to the squalene monooxygenase family. Requires FAD as cofactor.

The protein localises to the membrane. The enzyme catalyses squalene + reduced [NADPH--hemoprotein reductase] + O2 = (S)-2,3-epoxysqualene + oxidized [NADPH--hemoprotein reductase] + H2O + H(+). Its pathway is terpene metabolism; lanosterol biosynthesis; lanosterol from farnesyl diphosphate: step 2/3. In terms of biological role, catalyzes the stereospecific oxidation of squalene to (S)-2,3-epoxysqualene, and is considered to be a rate-limiting enzyme in steroid biosynthesis. In Brassica napus (Rape), this protein is Squalene monooxygenase 1,2 (SQP1,2).